A 762-amino-acid polypeptide reads, in one-letter code: 5-methyltetrahydropteroyltriglutamate--homocysteine methyltransferase (762 aa).

5-methyltetrahydropteroyltri-L-glutamate-binding positions include 17–20 (REWK) and K111. L-homocysteine is bound by residues 435–437 (IGS) and E488. L-methionine-binding positions include 435–437 (IGS) and E488. Residues 519-520 (RC) and W565 contribute to the 5-methyltetrahydropteroyltri-L-glutamate site. L-homocysteine is bound at residue D603. D603 is an L-methionine binding site. E609 contributes to the 5-methyltetrahydropteroyltri-L-glutamate binding site. Residues H645, C647, and E669 each contribute to the Zn(2+) site. H698 serves as the catalytic Proton donor. C730 contacts Zn(2+).

It belongs to the vitamin-B12 independent methionine synthase family. Requires Zn(2+) as cofactor.

The catalysed reaction is 5-methyltetrahydropteroyltri-L-glutamate + L-homocysteine = tetrahydropteroyltri-L-glutamate + L-methionine. Its pathway is amino-acid biosynthesis; L-methionine biosynthesis via de novo pathway; L-methionine from L-homocysteine (MetE route): step 1/1. Catalyzes the transfer of a methyl group from 5-methyltetrahydrofolate to homocysteine resulting in methionine formation. In Bacillus thuringiensis subsp. konkukian (strain 97-27), this protein is 5-methyltetrahydropteroyltriglutamate--homocysteine methyltransferase.